The sequence spans 284 residues: Bifunctional protein FolD (284 aa).

Residues 163–165 (GRS) and Ser188 contribute to the NADP(+) site.

Belongs to the tetrahydrofolate dehydrogenase/cyclohydrolase family. Homodimer.

The enzyme catalyses (6R)-5,10-methylene-5,6,7,8-tetrahydrofolate + NADP(+) = (6R)-5,10-methenyltetrahydrofolate + NADPH. It catalyses the reaction (6R)-5,10-methenyltetrahydrofolate + H2O = (6R)-10-formyltetrahydrofolate + H(+). It functions in the pathway one-carbon metabolism; tetrahydrofolate interconversion. Functionally, catalyzes the oxidation of 5,10-methylenetetrahydrofolate to 5,10-methenyltetrahydrofolate and then the hydrolysis of 5,10-methenyltetrahydrofolate to 10-formyltetrahydrofolate. The polypeptide is Bifunctional protein FolD (Lactococcus lactis subsp. lactis (strain IL1403) (Streptococcus lactis)).